The following is a 588-amino-acid chain: UvrABC system protein C (588 aa).

The 78-residue stretch at 12–89 (SKPGCYLYLN…IKKYRPKYNV (78 aa)) folds into the GIY-YIG domain. In terms of domain architecture, UVR spans 194–229 (NEVKTLLTNQMHKAAENLQFEEAQRIKEQIISLDFT).

It belongs to the UvrC family. Interacts with UvrB in an incision complex.

Its subcellular location is the cytoplasm. Functionally, the UvrABC repair system catalyzes the recognition and processing of DNA lesions. UvrC both incises the 5' and 3' sides of the lesion. The N-terminal half is responsible for the 3' incision and the C-terminal half is responsible for the 5' incision. The polypeptide is UvrABC system protein C (Mesoplasma florum (strain ATCC 33453 / NBRC 100688 / NCTC 11704 / L1) (Acholeplasma florum)).